We begin with the raw amino-acid sequence, 392 residues long: ATP phosphoribosyltransferase regulatory subunit (392 aa).

The protein belongs to the class-II aminoacyl-tRNA synthetase family. HisZ subfamily. Heteromultimer composed of HisG and HisZ subunits.

Its subcellular location is the cytoplasm. Its pathway is amino-acid biosynthesis; L-histidine biosynthesis; L-histidine from 5-phospho-alpha-D-ribose 1-diphosphate: step 1/9. Required for the first step of histidine biosynthesis. May allow the feedback regulation of ATP phosphoribosyltransferase activity by histidine. The chain is ATP phosphoribosyltransferase regulatory subunit from Marinomonas sp. (strain MWYL1).